A 210-amino-acid chain; its full sequence is MTYSVKEIFLTLQGEGGQAGKAAVFCRFSGCNLWSGREQDRAKAVCTFCDTDFVGTDGENGGKFATAEDLAAAVEAQWTGGPDDRLVVCTGGEPFLQLDDAAIAALHARGFQIAVETNGTITAPAGVDWICVSPKADAPVVQTSGQELKLVFPQEKAMPERFAALDFERFYLQPMDGPDRDANTQLAVAYCLSHPQWRLSVQTHKYLGLP.

Residues Leu-12 to Gly-14 and Arg-27 each bind substrate. Positions Gln-18 to Pro-210 constitute a Radical SAM core domain. [4Fe-4S] cluster is bound by residues Cys-31, Cys-46, and Cys-49. Mg(2+) is bound at residue Thr-51. Position 90 (Thr-90) interacts with substrate. Residues Gly-92, Ser-133–Lys-135, and Gln-173–Asp-176 each bind S-adenosyl-L-methionine. Pro-210 contacts substrate.

It belongs to the radical SAM superfamily. 7-carboxy-7-deazaguanine synthase family. Homodimer. [4Fe-4S] cluster serves as cofactor. Requires S-adenosyl-L-methionine as cofactor. The cofactor is Mg(2+).

It carries out the reaction 6-carboxy-5,6,7,8-tetrahydropterin + H(+) = 7-carboxy-7-deazaguanine + NH4(+). Its pathway is purine metabolism; 7-cyano-7-deazaguanine biosynthesis. Its function is as follows. Catalyzes the complex heterocyclic radical-mediated conversion of 6-carboxy-5,6,7,8-tetrahydropterin (CPH4) to 7-carboxy-7-deazaguanine (CDG), a step common to the biosynthetic pathways of all 7-deazapurine-containing compounds. This Caulobacter vibrioides (strain ATCC 19089 / CIP 103742 / CB 15) (Caulobacter crescentus) protein is 7-carboxy-7-deazaguanine synthase.